The sequence spans 217 residues: GrpE protein homolog 1, mitochondrial (217 aa).

A mitochondrion-targeting transit peptide spans 1 to 27; it reads MAARCVRLARRSLPALALSFRPSPRLL. The disordered stretch occupies residues 37–56; it reads GQNLDEDLGHCEPKTDPPSA. K94 is modified (N6-acetyllysine; alternate). K94 carries the post-translational modification N6-succinyllysine; alternate. K100 bears the N6-acetyllysine mark. K120 bears the N6-succinyllysine mark. An N6-acetyllysine; alternate modification is found at K215. K215 is modified (N6-succinyllysine; alternate).

It belongs to the GrpE family. In terms of assembly, probable component of the PAM complex at least composed of a mitochondrial HSP70 protein, GRPEL1 or GRPEL2, TIMM44, TIMM16/PAM16 and TIMM14/DNAJC19. Binds to HSP70, HSC70 and HSJ1B.

Its subcellular location is the mitochondrion matrix. In terms of biological role, essential component of the PAM complex, a complex required for the translocation of transit peptide-containing proteins from the inner membrane into the mitochondrial matrix in an ATP-dependent manner. Seems to control the nucleotide-dependent binding of mitochondrial HSP70 to substrate proteins. The chain is GrpE protein homolog 1, mitochondrial (Grpel1) from Mus musculus (Mouse).